A 143-amino-acid chain; its full sequence is Putative cytokinin riboside 5'-monophosphate phosphoribohydrolase LOG9 (143 aa).

Substrate contacts are provided by residues 23 to 24, 41 to 47, and T53; these read RK and RYETMEE.

It belongs to the LOG family.

The enzyme catalyses N(6)-(dimethylallyl)adenosine 5'-phosphate + H2O = N(6)-dimethylallyladenine + D-ribose 5-phosphate. It catalyses the reaction 9-ribosyl-trans-zeatin 5'-phosphate + H2O = trans-zeatin + D-ribose 5-phosphate. In terms of biological role, cytokinin-activating enzyme working in the direct activation pathway. Phosphoribohydrolase that converts inactive cytokinin nucleotides to the biologically active free-base forms. The chain is Putative cytokinin riboside 5'-monophosphate phosphoribohydrolase LOG9 (LOG9) from Arabidopsis thaliana (Mouse-ear cress).